The chain runs to 266 residues: NADP-dependent mannitol dehydrogenase (266 aa).

NADP(+)-binding residues include S53, N107, and K140. The active-site Proton donor is the S159. Y174, K178, I206, and T208 together coordinate NADP(+). Y174 (proton acceptor) is an active-site residue. K178 serves as the catalytic Lowers pKa of active site Tyr.

It belongs to the short-chain dehydrogenases/reductases (SDR) family. Homotetramer.

It carries out the reaction D-mannitol + NADP(+) = D-fructose + NADPH + H(+). Functionally, D-mannitol 2-dehydrogenase which is not necessary for D-mannitol catabolism. D-mannitol metabolism occurs via at least two different routes involving mannitol dehydrogenase (MDH) or mannitol 1-phosphate dehydrogenase, and the exact physiological role of mannitol dehydrogenases remains unclear. The polypeptide is NADP-dependent mannitol dehydrogenase (Hypocrea jecorina (strain ATCC 56765 / BCRC 32924 / NRRL 11460 / Rut C-30) (Trichoderma reesei)).